A 261-amino-acid chain; its full sequence is uncharacterized protein (261 aa).

Residues Lys16–Gln147 are a coiled coil.

The protein resides in the cytoplasm. This is an uncharacterized protein from Schizosaccharomyces pombe (strain 972 / ATCC 24843) (Fission yeast).